The chain runs to 363 residues: Fructose-bisphosphate aldolase (363 aa).

Positions 56 and 147 each coordinate substrate. Catalysis depends on E188, which acts as the Proton acceptor. K230 functions as the Schiff-base intermediate with dihydroxyacetone-P in the catalytic mechanism.

Belongs to the class I fructose-bisphosphate aldolase family.

It catalyses the reaction beta-D-fructose 1,6-bisphosphate = D-glyceraldehyde 3-phosphate + dihydroxyacetone phosphate. Its pathway is carbohydrate degradation; glycolysis; D-glyceraldehyde 3-phosphate and glycerone phosphate from D-glucose: step 4/4. The polypeptide is Fructose-bisphosphate aldolase (FBPA) (Echinococcus multilocularis (Fox tapeworm)).